Reading from the N-terminus, the 269-residue chain is Regulating synaptic membrane exocytosis protein 4 (269 aa).

Positions 115-233 constitute a C2 domain; the sequence is PMGGVEIGLQ…DLTTLAVGWY (119 aa). Serine 254 and serine 257 each carry phosphoserine.

As to quaternary structure, binds PPFIA3. As to expression, brain specific.

The protein localises to the synapse. Its function is as follows. Regulates synaptic membrane exocytosis. The sequence is that of Regulating synaptic membrane exocytosis protein 4 (Rims4) from Rattus norvegicus (Rat).